Here is a 190-residue protein sequence, read N- to C-terminus: Orotate phosphoribosyltransferase (190 aa).

Position 114–122 (114–122 (EDVITTGGS)) interacts with 5-phospho-alpha-D-ribose 1-diphosphate. 2 residues coordinate orotate: Thr118 and Arg146.

It belongs to the purine/pyrimidine phosphoribosyltransferase family. PyrE subfamily. As to quaternary structure, homodimer. Mg(2+) is required as a cofactor.

It carries out the reaction orotidine 5'-phosphate + diphosphate = orotate + 5-phospho-alpha-D-ribose 1-diphosphate. The protein operates within pyrimidine metabolism; UMP biosynthesis via de novo pathway; UMP from orotate: step 1/2. Functionally, catalyzes the transfer of a ribosyl phosphate group from 5-phosphoribose 1-diphosphate to orotate, leading to the formation of orotidine monophosphate (OMP). The chain is Orotate phosphoribosyltransferase from Pelotomaculum thermopropionicum (strain DSM 13744 / JCM 10971 / SI).